An 863-amino-acid chain; its full sequence is DNA ligase (863 aa).

NAD(+) contacts are provided by residues D76–D80, S125–L126, and E159. The active-site N6-AMP-lysine intermediate is K161. Positions 182 and 221 each coordinate NAD(+). The segment at E237–R256 is disordered. The segment covering R241 to G253 has biased composition (low complexity). Positions 346 and 370 each coordinate NAD(+). Zn(2+) is bound by residues C467, C470, C486, and C492. The region spanning G781–Q863 is the BRCT domain.

This sequence belongs to the NAD-dependent DNA ligase family. LigA subfamily. Mg(2+) serves as cofactor. Mn(2+) is required as a cofactor.

The catalysed reaction is NAD(+) + (deoxyribonucleotide)n-3'-hydroxyl + 5'-phospho-(deoxyribonucleotide)m = (deoxyribonucleotide)n+m + AMP + beta-nicotinamide D-nucleotide.. DNA ligase that catalyzes the formation of phosphodiester linkages between 5'-phosphoryl and 3'-hydroxyl groups in double-stranded DNA using NAD as a coenzyme and as the energy source for the reaction. It is essential for DNA replication and repair of damaged DNA. This chain is DNA ligase, found in Bifidobacterium animalis subsp. lactis (strain AD011).